The chain runs to 211 residues: MKNVDDLIDSAAELAEHGLSKGEIADELNVSRETASWLVERAGGNHTDTETAATTSTADIHVDWSALGRDSTRLRYAASAMADLLAKQGEEVDLTVGIEKAGAPLATAVANQLDTDLGTYAPAKHQWDEGDIDEQGGGFSRNFAAIRNRDCYVVDDIITSGTTMRESIDAIREQGGEPIACVVLVDKRGYDEIDGVPVYSLVDVVRVDREE.

It belongs to the purine/pyrimidine phosphoribosyltransferase family. GfcR subfamily.

In terms of biological role, DNA-binding transcriptional regulator that functions as a regulator of central sugar catabolic pathways. The sequence is that of Transcriptional regulator GfcR from Halorubrum lacusprofundi (strain ATCC 49239 / DSM 5036 / JCM 8891 / ACAM 34).